The primary structure comprises 327 residues: MDVVEGKALQVSDAVYAYQLDGKGGMTAISVDAVASATQPCWLHLDYTYPESAEWLQNTPLLPEVVRDGLAGESMRPKITRLGDGTMITLRGINFNNDARPDQLVTIRVYMTDKLIVSTRHRKVYSIDNVLNDLQSGTGPTGSGHWLVDIADGLTDHTSEFIEDLHDKIIDLEDDLMEQKVPPRGQMALLRKQLIVLRRYMAPQRDVFSRLASERLPWMNDDDRRRMQEISERLGRGLEDLDGSIARTAVLSDEISSLMADAMNRRTYTMSLLAMVFLPTTFLTGLFGVNLGGIPGNTDAFGFTIFCMMLVVLVLSVAWWLKRSKWL.

At 1 to 271 (MDVVEGKALQ…AMNRRTYTMS (271 aa)) the chain is on the cytoplasmic side. The helical transmembrane segment at 272 to 292 (LLAMVFLPTTFLTGLFGVNLG) threads the bilayer. Over 293-300 (GIPGNTDA) the chain is Periplasmic. Residues 301–321 (FGFTIFCMMLVVLVLSVAWWL) form a helical membrane-spanning segment. Residues 322-327 (KRSKWL) are Cytoplasmic-facing.

Belongs to the CorA metal ion transporter (MIT) (TC 1.A.35) family.

The protein resides in the cell inner membrane. The catalysed reaction is Zn(2+)(out) + H(+)(out) = Zn(2+)(in) + H(+)(in). Its function is as follows. Zinc transporter. Acts as a Zn(2+):proton symporter, which likely mediates zinc ion uptake. This is Zinc transport protein ZntB from Yersinia pseudotuberculosis serotype O:1b (strain IP 31758).